The chain runs to 1111 residues: MGRVSFNVRVSSVRRARCSCPGRCYLSCRVPPTTALHALNGFGRAGVLGETAGGTVGLGPSGTRGFLSGSKFQASGSLKDCFGAPPAPDVLRADSSVGEGCPQKLVTANLLRFLLLVLIPCICALIVLLAILLSFVGTLKKVYFKSNDSEPLVTDGEVRVPGVIHVNRYENTGAPSMPPSQSIPAWTPRAPSLEDQSHGNTSTCVNITHRQCQILPYHSTLAPLLPIVKNMDTEKFLKFFTYLHRLGCYQHILLFGCSLAFPKCIVDGDDRHGLLPCRSFCEAAKEGCESVLGMVNSSWPDSLRCSQFRYHTENNSDASRICFSLQQEHGKQSLCGGGESFLCTSGLCISKKLQCNGYNDCDDWSDEAHCNCSEDLFHCGTGKCLHHSLVCDGYDDCGDLSDEQNCDCNLTKEHRCGDGRCIAAEWVCDGDHDCVDKSDEVNCSCPSQGLVECRSGQCIPSTFQCDGDEDCKDGSDEENCSDRPTPCPGGDRGCLDSSCVESCAGSSLCDSDSSLSNCSHCEPITLELCMNLPYNLTHYPNYLGHRTQKEASISWESALFPALVQTNCYKYLMFFACTILVPKCDVNTGQRVPPCRLLCEHSKERCESVLGIVGLQWPEDTDCSQFPEQSSDNQTCLLPNEDVEECSPSHFKCRSGRCVLGSRRCDGQADCDDDSDEENCGCKERDLWECPLNKQCLKHTLICDGFPDCSDSMDEKNCSFCQDDELECANHECVPRDLWCDGWTDCSDSSDEWGCVTLSKNGNSSSFLTVHRSARDHHVCADGWQETLSQLACRQMGLGEPSVTELVQGQEGQQWLRLHSSWENLNGSTLQELLVHRRSCPSGSEISLLCTKQDCGRRPAARMNKRILGGRTSRPGRWPWQCSLQSEPSGHICGCVLIAKKWVLTVAHCFEGREDADVWKVVFGINNLDHPSGFMQTRFVKTILLHPRYSRAVVDYDISVVELSDDINETSYVRPVCLPSPREFLEPDTYCYITGWGHMGNKMPFKLQEGEVRIIPLEQCQSYFDMKTITNRMICAGYESGTVDSCMIDSGGPLVCERPGGQWTLFGLTSWGSVCFSKVLGPGVYSNVSYFVDWIERQIYIQTFLQKKSQG.

The Cytoplasmic portion of the chain corresponds to 1-112; that stretch reads MGRVSFNVRV…QKLVTANLLR (112 aa). The DDNN motif motif lies at 93–96; that stretch reads ADSS. The chain crosses the membrane as a helical; Signal-anchor for type II membrane protein span at residues 113-133; that stretch reads FLLLVLIPCICALIVLLAILL. The Extracellular portion of the chain corresponds to 134–1111; it reads SFVGTLKKVY…QTFLQKKSQG (978 aa). N147 carries N-linked (GlcNAc...) asparagine glycosylation. Residues 199 to 325 enclose the FZ 1 domain; the sequence is GNTSTCVNIT…SDASRICFSL (127 aa). Cystine bridges form between C204–C264, C212–C257, C248–C288, C277–C322, C281–C305, C335–C348, C343–C361, C355–C370, C372–C384, C379–C397, C391–C406, C408–C421, C416–C434, C428–C443, C445–C458, C453–C471, C465–C480, C521–C584, C529–C577, C568–C606, C595–C636, C599–C623, C646–C658, C653–C671, C665–C680, C682–C696, C690–C709, C703–C718, C721–C733, C728–C746, and C740–C755. N296 is a glycosylation site (N-linked (GlcNAc...) asparagine). LDL-receptor class A domains follow at residues 334 to 371, 371 to 407, 407 to 444, and 444 to 481; these read LCGGGESFLCTSGLCISKKLQCNGYNDCDDWSDEAHCN, NCSEDLFHCGTGKCLHHSLVCDGYDDCGDLSDEQNCD, DCNLTKEHRCGDGRCIAAEWVCDGDHDCVDKSDEVNCS, and SCPSQGLVECRSGQCIPSTFQCDGDEDCKDGSDEENCS. A glycan (N-linked (GlcNAc...) asparagine) is linked at N409. In terms of domain architecture, FZ 2 spans 516 to 639; it reads SNCSHCEPIT…SSDNQTCLLP (124 aa). N535 carries N-linked (GlcNAc...) asparagine glycosylation. LDL-receptor class A domains follow at residues 645–681, 681–719, and 720–756; these read ECSPSHFKCRSGRCVLGSRRCDGQADCDDDSDEENCG, GCKERDLWECPLNKQCLKHTLICDGFPDCSDSMDEKNCS, and FCQDDELECANHECVPRDLWCDGWTDCSDSSDEWGCV. An SRCR domain is found at 756 to 851; that stretch reads VTLSKNGNSS…SGSEISLLCT (96 aa). An N-linked (GlcNAc...) asparagine glycan is attached at N763. 4 disulfide bridges follow: C855–C977, C893–C909, C991–C1056, and C1020–C1035. Residues 867 to 1100 form the Peptidase S1 domain; the sequence is ILGGRTSRPG…FVDWIERQIY (234 aa). Catalysis depends on charge relay system residues H908 and D957. The active-site Charge relay system is S1050.

Belongs to the peptidase S1 family. N-glycosylated; required for processing and activation. In terms of processing, activated through proteolytic processing by a trypsin-like protease; cleaved into a N-terminal propeptide and an activated corin protease fragment. Atrial natriuretic peptide-converting enzyme, 180 kDa soluble fragment is produced by cleavage by ADAM10. Cleavage by ADAM10 to produce soluble 180 kDa soluble fragment takes place after the transmembrane region and before FZ 1. Post-translationally, a disulfide bond links the activated corin protease fragment and the N-terminal propeptide. The disulfide bond also links the activated corin protease fragment with Atrial natriuretic peptide-converting enzyme, 180 kDa soluble fragment. In terms of tissue distribution, specifically expressed in heart. Also detected in kidney, aorta, brain and testis. In kidney, present in epithelial cells, with segmental expression in the proximal tubule, thick ascending limb, connecting tubule, and throughout the collecting duct (at protein level).

It is found in the cell membrane. Its subcellular location is the cytoplasmic vesicle. The protein resides in the secreted. Its function is as follows. Serine-type endopeptidase involved in atrial natriuretic peptide (NPPA) processing. Converts through proteolytic cleavage the non-functional propeptide NPPA into the active hormone, thereby regulating blood pressure in heart and promoting natriuresis, diuresis and vasodilation. Proteolytic cleavage of pro-NPPA also plays a role in female pregnancy by promoting trophoblast invasion and spiral artery remodeling in uterus. Also acts as a regulator of sodium reabsorption in kidney. May also process pro-NPPB the B-type natriuretic peptide. This chain is Atrial natriuretic peptide-converting enzyme (Corin), found in Rattus norvegicus (Rat).